A 143-amino-acid chain; its full sequence is Flagellar assembly factor FliW (143 aa).

This sequence belongs to the FliW family. Interacts with translational regulator CsrA and flagellin(s).

The protein resides in the cytoplasm. Acts as an anti-CsrA protein, binds CsrA and prevents it from repressing translation of its target genes, one of which is flagellin. Binds to flagellin and participates in the assembly of the flagellum. The chain is Flagellar assembly factor FliW from Bacillus licheniformis (strain ATCC 14580 / DSM 13 / JCM 2505 / CCUG 7422 / NBRC 12200 / NCIMB 9375 / NCTC 10341 / NRRL NRS-1264 / Gibson 46).